We begin with the raw amino-acid sequence, 327 residues long: Zinc transport protein ZntB (327 aa).

Residues 1–273 lie on the Cytoplasmic side of the membrane; that stretch reads MEAIKGSDVN…ARRTYTMSLM (273 aa). A helical transmembrane segment spans residues 274 to 294; the sequence is AMVFLPSTFLTGLFGVNLGGI. Residues 295–300 are Periplasmic-facing; the sequence is PGGGWQ. Residues 301–321 traverse the membrane as a helical segment; that stretch reads FGFSIFCILLVVLIGGVALWL. Residues 322–327 lie on the Cytoplasmic side of the membrane; sequence YRSKWL.

This sequence belongs to the CorA metal ion transporter (MIT) (TC 1.A.35) family.

It is found in the cell inner membrane. The enzyme catalyses Zn(2+)(out) + H(+)(out) = Zn(2+)(in) + H(+)(in). Functionally, zinc transporter. Acts as a Zn(2+):proton symporter, which likely mediates zinc ion uptake. In Shigella flexneri serotype 5b (strain 8401), this protein is Zinc transport protein ZntB.